Consider the following 321-residue polypeptide: Glucokinase (321 aa).

Residue 8–13 participates in ATP binding; that stretch reads GDVGGT.

Belongs to the bacterial glucokinase family.

Its subcellular location is the cytoplasm. It carries out the reaction D-glucose + ATP = D-glucose 6-phosphate + ADP + H(+). In Salmonella typhi, this protein is Glucokinase.